A 163-amino-acid polypeptide reads, in one-letter code: Neurotrophin-3 (163 aa).

An N-terminal signal peptide occupies residues 1–3 (IQS). A propeptide spanning residues 4 to 119 (TSMDQGILTE…VLNRTSRRKR (116 aa)) is cleaved from the precursor. N-linked (GlcNAc...) asparagine glycosylation is present at N112.

It belongs to the NGF-beta family.

It is found in the secreted. Seems to promote the survival of visceral and proprioceptive sensory neurons. In Chilabothrus striatus (Haitian boa constrictor), this protein is Neurotrophin-3 (NTF3).